Here is a 120-residue protein sequence, read N- to C-terminus: DNA-directed RNA polymerase II subunit rpb11 (120 aa).

This sequence belongs to the archaeal Rpo11/eukaryotic RPB11/RPC19 RNA polymerase subunit family. As to quaternary structure, component of the RNA polymerase II (Pol II) complex consisting of 12 subunits.

The protein resides in the nucleus. Functionally, DNA-dependent RNA polymerase catalyzes the transcription of DNA into RNA using the four ribonucleoside triphosphates as substrates. Component of RNA polymerase II which synthesizes mRNA precursors and many functional non-coding RNAs. Pol II is the central component of the basal RNA polymerase II transcription machinery. It is composed of mobile elements that move relative to each other. RPB11 is part of the core element with the central large cleft. The polypeptide is DNA-directed RNA polymerase II subunit rpb11 (polr2j) (Dictyostelium discoideum (Social amoeba)).